We begin with the raw amino-acid sequence, 1397 residues long: Probable cyclin-dependent serine/threonine-protein kinase DDB_G0292550 (1397 aa).

The region spanning 4-287 is the Protein kinase domain; it reads FQIIELIGSG…TKEALNHPWF (284 aa). Residues 10–18 and K33 each bind ATP; that span reads IGSGSYGKV. The active-site Proton acceptor is the D124. Disordered stretches follow at residues 412 to 567, 671 to 728, 763 to 831, 845 to 949, 996 to 1101, 1115 to 1174, 1227 to 1324, and 1340 to 1397; these read NNNN…NNNN, PLSI…NNGF, NEMG…NGNN, NNNN…YANH, NGLA…NTHN, NNGF…NSPV, NSAS…SFGL, and KKKK…IVLD. The segment covering 676–715 has biased composition (low complexity); the sequence is SQHHNTSSSDTHNNNNNNYNNNNNNNNNINNNNINSIHNQ. Composition is skewed to low complexity over residues 845-941, 1012-1021, 1028-1101, and 1115-1155; these read NNNN…NGNG, NSNNNNSGNN, NTFN…NTHN, and NNGF…TKNN. Polar residues predominate over residues 1156 to 1171; the sequence is TQFGPNILSSTQTSHN. 2 stretches are compositionally biased toward low complexity: residues 1253–1321 and 1354–1380; these read NNNN…NNNS and SSSQQSQTQQQHQIQQQSQTQQQSQTQ.

It belongs to the protein kinase superfamily. CMGC Ser/Thr protein kinase family. CDC2/CDKX subfamily.

It carries out the reaction L-seryl-[protein] + ATP = O-phospho-L-seryl-[protein] + ADP + H(+). The enzyme catalyses L-threonyl-[protein] + ATP = O-phospho-L-threonyl-[protein] + ADP + H(+). The sequence is that of Probable cyclin-dependent serine/threonine-protein kinase DDB_G0292550 from Dictyostelium discoideum (Social amoeba).